The following is a 400-amino-acid chain: Nicotinate phosphoribosyltransferase (400 aa).

His-220 carries the post-translational modification Phosphohistidine; by autocatalysis.

Belongs to the NAPRTase family. In terms of processing, transiently phosphorylated on a His residue during the reaction cycle. Phosphorylation strongly increases the affinity for substrates and increases the rate of nicotinate D-ribonucleotide production. Dephosphorylation regenerates the low-affinity form of the enzyme, leading to product release.

The enzyme catalyses nicotinate + 5-phospho-alpha-D-ribose 1-diphosphate + ATP + H2O = nicotinate beta-D-ribonucleotide + ADP + phosphate + diphosphate. The protein operates within cofactor biosynthesis; NAD(+) biosynthesis; nicotinate D-ribonucleotide from nicotinate: step 1/1. In terms of biological role, catalyzes the synthesis of beta-nicotinate D-ribonucleotide from nicotinate and 5-phospho-D-ribose 1-phosphate at the expense of ATP. The chain is Nicotinate phosphoribosyltransferase from Salmonella dublin (strain CT_02021853).